The sequence spans 432 residues: Enolase (432 aa).

Gln-166 provides a ligand contact to (2R)-2-phosphoglycerate. Residue Glu-208 is the Proton donor of the active site. Mg(2+)-binding residues include Asp-245, Glu-291, and Asp-318. Positions 343, 372, 373, and 394 each coordinate (2R)-2-phosphoglycerate. Lys-343 acts as the Proton acceptor in catalysis.

Belongs to the enolase family. Mg(2+) serves as cofactor.

The protein resides in the cytoplasm. Its subcellular location is the secreted. The protein localises to the cell surface. It carries out the reaction (2R)-2-phosphoglycerate = phosphoenolpyruvate + H2O. Its pathway is carbohydrate degradation; glycolysis; pyruvate from D-glyceraldehyde 3-phosphate: step 4/5. Its function is as follows. Catalyzes the reversible conversion of 2-phosphoglycerate (2-PG) into phosphoenolpyruvate (PEP). It is essential for the degradation of carbohydrates via glycolysis. The protein is Enolase of Leptospira borgpetersenii serovar Hardjo-bovis (strain L550).